We begin with the raw amino-acid sequence, 83 residues long: Large ribosomal subunit protein bL28 (83 aa).

It belongs to the bacterial ribosomal protein bL28 family.

This is Large ribosomal subunit protein bL28 from Amoebophilus asiaticus (strain 5a2).